A 103-amino-acid chain; its full sequence is Histone H4 (103 aa).

The span at 1-14 (MSGRGKGGKGLGKG) shows a compositional bias: gly residues. The interval 1–20 (MSGRGKGGKGLGKGGAKRHR) is disordered. Serine 2 is modified (N-acetylserine). N6-acetyl-N6-methyllysine; alternate is present on residues lysine 6 and lysine 13. N6-acetyllysine is present on lysine 17. Residues 17 to 21 (KRHRK) mediate DNA binding. Residue lysine 21 is modified to N6-methyllysine.

Belongs to the histone H4 family. In terms of assembly, the nucleosome is a histone octamer containing two molecules each of H2A, H2B, H3 and H4 assembled in one H3-H4 heterotetramer and two H2A-H2B heterodimers. The octamer wraps approximately 147 bp of DNA.

It is found in the nucleus. The protein resides in the chromosome. Functionally, core component of nucleosome. Nucleosomes wrap and compact DNA into chromatin, limiting DNA accessibility to the cellular machineries which require DNA as a template. Histones thereby play a central role in transcription regulation, DNA repair, DNA replication and chromosomal stability. DNA accessibility is regulated via a complex set of post-translational modifications of histones, also called histone code, and nucleosome remodeling. In Dendronephthya klunzingeri (Klunzinger's soft coral), this protein is Histone H4 (H4DEKL).